The sequence spans 621 residues: Glutamine--fructose-6-phosphate aminotransferase [isomerizing] (621 aa).

Cys-2 functions as the Nucleophile; for GATase activity in the catalytic mechanism. Residues 2-223 (CGIIGYVGEG…DRELGIISIS (222 aa)) form the Glutamine amidotransferase type-2 domain. 2 consecutive SIS domains span residues 289-436 (LHLE…HKFT) and 470-611 (LSKQ…IDKP). The active-site For Fru-6P isomerization activity is the Lys-616.

As to quaternary structure, homodimer.

The protein localises to the plastid. Its subcellular location is the chloroplast. The catalysed reaction is D-fructose 6-phosphate + L-glutamine = D-glucosamine 6-phosphate + L-glutamate. Its function is as follows. Catalyzes the first step in hexosamine metabolism, converting fructose-6P into glucosamine-6P using glutamine as a nitrogen source. The chain is Glutamine--fructose-6-phosphate aminotransferase [isomerizing] from Cyanidium caldarium (Red alga).